Reading from the N-terminus, the 173-residue chain is Lipoprotein signal peptidase (173 aa).

3 helical membrane-spanning segments follow: residues 11–31 (FGLI…WIVT), 69–89 (TTRW…AFWM), and 93–113 (QAKG…GNIV). Residues D123 and D142 contribute to the active site. A helical transmembrane segment spans residues 134-154 (PFMIFNVADACITIGVLLLVA).

The protein belongs to the peptidase A8 family.

Its subcellular location is the cell inner membrane. It catalyses the reaction Release of signal peptides from bacterial membrane prolipoproteins. Hydrolyzes -Xaa-Yaa-Zaa-|-(S,diacylglyceryl)Cys-, in which Xaa is hydrophobic (preferably Leu), and Yaa (Ala or Ser) and Zaa (Gly or Ala) have small, neutral side chains.. It participates in protein modification; lipoprotein biosynthesis (signal peptide cleavage). Functionally, this protein specifically catalyzes the removal of signal peptides from prolipoproteins. This is Lipoprotein signal peptidase from Sphingopyxis alaskensis (strain DSM 13593 / LMG 18877 / RB2256) (Sphingomonas alaskensis).